The primary structure comprises 769 residues: Multiple C2 domain and transmembrane region protein 5 (769 aa).

C2 domains lie at 23–143 (SVTG…PQWY), 184–305 (PEGV…SRWF), and 345–467 (YSSD…THSY). Ca(2+) is bound by residues Asp-56, Asp-62, Asp-109, Asp-111, and Asp-116. 2 helical membrane passes run 604–624 (IILVLYPELILPTVFLYLFLI) and 712–732 (LFVLFCLIAAIVLYVTPFQVV).

It belongs to the MCTP family. Ca(2+) is required as a cofactor. In terms of tissue distribution, highly expressed in roots meristems and shoot apical meristems (SAMs). Observed in flowers.

The protein resides in the endoplasmic reticulum membrane. Functionally, may function as a signaling molecule by regulating the trafficking of other regulators. The chain is Multiple C2 domain and transmembrane region protein 5 from Arabidopsis thaliana (Mouse-ear cress).